Reading from the N-terminus, the 236-residue chain is Small ribosomal subunit protein uS3 (236 aa).

The 69-residue stretch at 39-107 folds into the KH type-2 domain; it reads IREFLTEELK…DTSLNIVEVR (69 aa). A disordered region spans residues 214-236; it reads ASERRAVEGDNQGSSSNRRRENA.

The protein belongs to the universal ribosomal protein uS3 family. As to quaternary structure, part of the 30S ribosomal subunit. Forms a tight complex with proteins S10 and S14.

In terms of biological role, binds the lower part of the 30S subunit head. Binds mRNA in the 70S ribosome, positioning it for translation. The sequence is that of Small ribosomal subunit protein uS3 from Brucella canis (strain ATCC 23365 / NCTC 10854 / RM-666).